We begin with the raw amino-acid sequence, 419 residues long: Putative zinc metalloprotease spyM18_2031 (419 aa).

Residue His-18 participates in Zn(2+) binding. Residue Glu-19 is part of the active site. His-22 contributes to the Zn(2+) binding site. A run of 4 helical transmembrane segments spans residues 169-191 (LITNFAGPMNNFILGIVVFILLV), 301-323 (LAWSGAFTILNALKGLITGFSLN), 343-365 (LESVLSLMAMLSINLGIFNLIPI), and 392-411 (AYITLAGVAIMVVLMIAVTW). The PDZ domain occupies 175–274 (GPMNNFILGI…LKTVAVKPQK (100 aa)).

This sequence belongs to the peptidase M50B family. Requires Zn(2+) as cofactor.

The protein resides in the cell membrane. This Streptococcus pyogenes serotype M18 (strain MGAS8232) protein is Putative zinc metalloprotease spyM18_2031.